Consider the following 428-residue polypeptide: 3-phosphoshikimate 1-carboxyvinyltransferase (428 aa).

Residues Lys-23, Ser-24, and Arg-28 each contribute to the 3-phosphoshikimate site. Lys-23 is a phosphoenolpyruvate binding site. Residues Gly-97 and Arg-125 each contribute to the phosphoenolpyruvate site. 3-phosphoshikimate-binding residues include Ser-170, Ser-171, Gln-172, Ser-198, Asp-314, Asn-337, and Lys-341. Phosphoenolpyruvate is bound at residue Gln-172. Catalysis depends on Asp-314, which acts as the Proton acceptor. Phosphoenolpyruvate-binding residues include Arg-345, Arg-387, and Lys-412.

It belongs to the EPSP synthase family. Monomer.

The protein localises to the cytoplasm. It catalyses the reaction 3-phosphoshikimate + phosphoenolpyruvate = 5-O-(1-carboxyvinyl)-3-phosphoshikimate + phosphate. The protein operates within metabolic intermediate biosynthesis; chorismate biosynthesis; chorismate from D-erythrose 4-phosphate and phosphoenolpyruvate: step 6/7. Its function is as follows. Catalyzes the transfer of the enolpyruvyl moiety of phosphoenolpyruvate (PEP) to the 5-hydroxyl of shikimate-3-phosphate (S3P) to produce enolpyruvyl shikimate-3-phosphate and inorganic phosphate. The sequence is that of 3-phosphoshikimate 1-carboxyvinyltransferase from Hamiltonella defensa subsp. Acyrthosiphon pisum (strain 5AT).